The chain runs to 252 residues: MERVLIVNADDFGLSKGQNYGIIEACRNGVVTSTTALVNGAAIDHAAQLSRSTPELAVGMHFVLTLGEPLSAMPGLTREGRLGKWIWQQAEEGRLPLEEIAHELACQYRRFVDLFGHEPTHLDSHHHVHMIAPIYPIVAAFAREKGIALRIDRQVAAQSGLDQQAARSSAGFSSEFYGEAVSEELFLQTLDASIARGERSLEVMCHPAFVDQTIMGSAYCYPRLGELDVLTSAALKAAVADRGYRLGTYRDV.

2 residues coordinate Mg(2+): H61 and H125.

The protein belongs to the YdjC deacetylase family. ChbG subfamily. Homodimer. The cofactor is Mg(2+).

It localises to the cytoplasm. It catalyses the reaction N,N'-diacetylchitobiose + H2O = N-acetyl-beta-D-glucosaminyl-(1-&gt;4)-D-glucosamine + acetate. The enzyme catalyses diacetylchitobiose-6'-phosphate + H2O = N'-monoacetylchitobiose-6'-phosphate + acetate. It participates in glycan degradation; chitin degradation. Functionally, involved in the degradation of chitin. ChbG is essential for growth on the acetylated chitooligosaccharides chitobiose and chitotriose but is dispensable for growth on cellobiose and chitosan dimer, the deacetylated form of chitobiose. Deacetylation of chitobiose-6-P and chitotriose-6-P is necessary for both the activation of the chb promoter by the regulatory protein ChbR and the hydrolysis of phosphorylated beta-glucosides by the phospho-beta-glucosidase ChbF. Catalyzes the removal of only one acetyl group from chitobiose-6-P to yield monoacetylchitobiose-6-P, the inducer of ChbR and the substrate of ChbF. The chain is Chitooligosaccharide deacetylase from Klebsiella pneumoniae (strain 342).